A 108-amino-acid polypeptide reads, in one-letter code: Evasin P1229 (108 aa).

The signal sequence occupies residues 1–31 (MEVRTFAFLQIVVFVALGIQLFAAVTDAADA). 3 disulfides stabilise this stretch: C41/C63, C45/C65, and C56/C76. A glycan (N-linked (GlcNAc...) asparagine) is linked at N44. The disordered stretch occupies residues 88–108 (GDPNNSDLDAATPRHPDASSR). A glycan (N-linked (GlcNAc...) asparagine) is linked at N91. The segment covering 99–108 (TPRHPDASSR) has biased composition (basic and acidic residues).

It is found in the secreted. Functionally, salivary chemokine-binding protein which binds to host chemokines CXCL1 and CXCL8. The sequence is that of Evasin P1229 from Ixodes ricinus (Common tick).